The sequence spans 559 residues: Poly(3-hydroxyalkanoate) polymerase 1 (559 aa).

The active site involves C296.

This sequence belongs to the PHA/PHB synthase family. Type II PhaC subfamily.

It functions in the pathway biopolymer metabolism; poly-(R)-3-hydroxybutanoate biosynthesis. Functionally, synthesizes poly(3-hydroxyalkanoates) (PHA), complements a mutant of P.putida that does not make PHA. The protein is Poly(3-hydroxyalkanoate) polymerase 1 of Ectopseudomonas oleovorans (Pseudomonas oleovorans).